The sequence spans 401 residues: NALCN channel auxiliary factor 2 (401 aa).

Residues 42–62 traverse the membrane as a helical segment; that stretch reads LASLLFFTALLSDHLWLCAGG. Asn-77, Asn-97, Asn-153, and Asn-178 each carry an N-linked (GlcNAc...) asparagine glycan. The chain crosses the membrane as a helical span at residues 362-382; that stretch reads LCVLVLFLLHTFISITTLQHC.

It belongs to the NALF family.

The protein resides in the membrane. Functionally, probable component of the NALCN channel complex, a channel that regulates the resting membrane potential and controls neuronal excitability. This is NALCN channel auxiliary factor 2 (nalf2) from Danio rerio (Zebrafish).